A 216-amino-acid polypeptide reads, in one-letter code: Orotate phosphoribosyltransferase (216 aa).

Lysine 30 contacts 5-phospho-alpha-D-ribose 1-diphosphate. 38–39 is an orotate binding site; that stretch reads FF. Residues 75-76, arginine 102, lysine 103, lysine 106, histidine 108, and 128-136 contribute to the 5-phospho-alpha-D-ribose 1-diphosphate site; these read YK and DDVITAGTA. 2 residues coordinate orotate: threonine 132 and arginine 160.

This sequence belongs to the purine/pyrimidine phosphoribosyltransferase family. PyrE subfamily. As to quaternary structure, homodimer. It depends on Mg(2+) as a cofactor.

The enzyme catalyses orotidine 5'-phosphate + diphosphate = orotate + 5-phospho-alpha-D-ribose 1-diphosphate. It participates in pyrimidine metabolism; UMP biosynthesis via de novo pathway; UMP from orotate: step 1/2. Its function is as follows. Catalyzes the transfer of a ribosyl phosphate group from 5-phosphoribose 1-diphosphate to orotate, leading to the formation of orotidine monophosphate (OMP). The sequence is that of Orotate phosphoribosyltransferase from Acinetobacter baumannii (strain AB307-0294).